Consider the following 452-residue polypeptide: Fructose-2,6-bisphosphatase (452 aa).

Residues 1–223 (MGYSTISNDN…VFYVMNIRPK (223 aa)) form a 6-phosphofructo-2-kinase region. 20–28 (GLPARGKSF) contributes to the ATP binding site. Beta-D-fructose 6-phosphate-binding residues include R53 and R78. D104 is a catalytic residue. The beta-D-fructose 6-phosphate site is built by T106 and R112. 143-148 (NAKDIG) contacts ATP. Residues R169 and Y173 each coordinate beta-D-fructose 6-phosphate. The tract at residues 224–452 (PKYIWLSRHG…LNDSPLEDKF (229 aa)) is fructose-2,6-bisphosphatase. R231 provides a ligand contact to beta-D-fructose 2,6-bisphosphate. The active-site Tele-phosphohistidine intermediate is the H232. 2 residues coordinate beta-D-fructose 2,6-bisphosphate: N238 and G244. E302 acts as the Proton donor/acceptor in catalysis. 6 residues coordinate beta-D-fructose 2,6-bisphosphate: Y313, R327, K331, Y342, Q368, and R372. An ATP-binding site is contributed by 324–327 (FKAR). Residues 368–372 (QAVLR) and Y404 each bind ATP. Phosphoserine occurs at positions 435 and 446.

It in the C-terminal section; belongs to the phosphoglycerate mutase family.

It catalyses the reaction beta-D-fructose 2,6-bisphosphate + H2O = beta-D-fructose 6-phosphate + phosphate. Its activity is regulated as follows. Inhibited by fructose 6-P, activated by glycerol 3-P. Monofunctional, high-specificity fructose-2,6-bisphosphatase, which releases phosphate from the 2-position of fructose 2,6-bisphosphate. Has no detectable 6-phosphofructo-2-kinase activity. In Saccharomyces cerevisiae (strain ATCC 204508 / S288c) (Baker's yeast), this protein is Fructose-2,6-bisphosphatase.